A 448-amino-acid polypeptide reads, in one-letter code: Ribulose bisphosphate carboxylase large chain (448 aa).

An N6,N6,N6-trimethyllysine modification is found at lysine 4. 2 residues coordinate substrate: asparagine 113 and threonine 163. The active-site Proton acceptor is lysine 165. Substrate is bound at residue lysine 167. Residues lysine 191, aspartate 193, and glutamate 194 each contribute to the Mg(2+) site. Lysine 191 carries the post-translational modification N6-carboxylysine. Histidine 284 serves as the catalytic Proton acceptor. Substrate is bound by residues arginine 285, histidine 317, and serine 369.

The protein belongs to the RuBisCO large chain family. Type I subfamily. Heterohexadecamer of 8 large chains and 8 small chains; disulfide-linked. The disulfide link is formed within the large subunit homodimers. Mg(2+) is required as a cofactor. In terms of processing, the disulfide bond which can form in the large chain dimeric partners within the hexadecamer appears to be associated with oxidative stress and protein turnover.

Its subcellular location is the plastid. The protein resides in the chloroplast. The enzyme catalyses 2 (2R)-3-phosphoglycerate + 2 H(+) = D-ribulose 1,5-bisphosphate + CO2 + H2O. It carries out the reaction D-ribulose 1,5-bisphosphate + O2 = 2-phosphoglycolate + (2R)-3-phosphoglycerate + 2 H(+). In terms of biological role, ruBisCO catalyzes two reactions: the carboxylation of D-ribulose 1,5-bisphosphate, the primary event in carbon dioxide fixation, as well as the oxidative fragmentation of the pentose substrate in the photorespiration process. Both reactions occur simultaneously and in competition at the same active site. This chain is Ribulose bisphosphate carboxylase large chain, found in Eucryphia lucida (Leatherwood).